Reading from the N-terminus, the 714-residue chain is K(+)-insensitive pyrophosphate-energized proton pump (714 aa).

The first 20 residues, 1 to 20, serve as a signal peptide directing secretion; that stretch reads MRMTVIPIVILCGVLSVVYA. 4 helical membrane-spanning segments follow: residues 52–74, 85–105, 128–148, and 166–186; these read LTRQ…WYLL, GAVL…RANL, ITGM…YFVL, and VSLG…GGIF. Lys188 lines the substrate pocket. Positions 191, 195, 218, and 221 each coordinate Mg(2+). Helical transmembrane passes span 238–258, 263–283, 298–318, 333–353, 383–403, and 411–431; these read AVSV…TPIL, VYPL…TFFV, GLIA…YATV, GTNL…IVVI, GLAV…GGII, and LFGT…IVAL. Asp439 provides a ligand contact to Mg(2+). The next 4 membrane-spanning stretches (helical) occupy residues 470-490, 522-542, 591-611, and 618-638; these read AVTK…LFAA, YVVA…GIAM, VIPS…VLLI, and AFAA…FVAI. Residues Asp648, Asp680, and Asp684 each contribute to the Ca(2+) site. Lys687 is a substrate binding site. The helical transmembrane segment at 693-713 threads the bilayer; it reads AVNPAIKITNIVALLLLAVLA.

Belongs to the H(+)-translocating pyrophosphatase (TC 3.A.10) family. K(+)-insensitive subfamily. In terms of assembly, homodimer. It depends on Mg(2+) as a cofactor.

The protein localises to the acidocalcisome membrane. It catalyses the reaction diphosphate + H2O + H(+)(in) = 2 phosphate + 2 H(+)(out). Functionally, proton pump that utilizes the energy of pyrophosphate hydrolysis as the driving force for proton movement across the membrane. Generates a proton motive force. The polypeptide is K(+)-insensitive pyrophosphate-energized proton pump (Agrobacterium fabrum (strain C58 / ATCC 33970) (Agrobacterium tumefaciens (strain C58))).